The chain runs to 457 residues: Carboxypeptidase N catalytic chain (457 aa).

Residues 1-23 form the signal peptide; the sequence is MPDLPSAFLPLLLLSKFVTPVTF. Positions 24-338 constitute a Peptidase M14 domain; the sequence is RHHRYDDLVR…EALIQFLEQV (315 aa). An intrachain disulfide couples Cys-42 to Cys-104. Zn(2+) is bound by residues His-86, Glu-89, and His-216. An intrachain disulfide couples Cys-271 to Cys-311. Catalysis depends on Glu-308, which acts as the Proton donor/acceptor. Residues Thr-400, Thr-402, and Thr-409 are each glycosylated (O-linked (GalNAc...) threonine). Positions 418 to 457 are disordered; that stretch reads STTQVHPVQKAPGRGQGSRAKQPRTSRKKDQAAKRHRGPA.

It belongs to the peptidase M14 family. As to quaternary structure, tetramer of two catalytic chains and two glycosylated inactive chains. It depends on Zn(2+) as a cofactor. As to expression, plasma. Expressed in liver.

The protein resides in the secreted. It is found in the extracellular space. It carries out the reaction Release of a C-terminal basic amino acid, preferentially lysine.. Functionally, protects the body from potent vasoactive and inflammatory peptides containing C-terminal Arg or Lys (such as kinins or anaphylatoxins) which are released into the circulation. The protein is Carboxypeptidase N catalytic chain (Cpn1) of Rattus norvegicus (Rat).